Reading from the N-terminus, the 158-residue chain is Large ribosomal subunit protein uL16 (158 aa).

This sequence belongs to the universal ribosomal protein uL16 family. As to quaternary structure, part of the 50S ribosomal subunit.

Its function is as follows. Binds 23S rRNA and is also seen to make contacts with the A and possibly P site tRNAs. This chain is Large ribosomal subunit protein uL16, found in Synechococcus sp. (strain CC9605).